Reading from the N-terminus, the 72-residue chain is uncharacterized protein (72 aa).

The tract at residues 1-53 is disordered; the sequence is MTNEPSTSTPTSTSTSTSTSTSTSTTTLTSTSSTPTSTSTSTSTSTSTSTSTS.

This is an uncharacterized protein from Dictyostelium discoideum (Social amoeba).